The following is a 264-amino-acid chain: Thymidylate synthase (264 aa).

DUMP is bound at residue arginine 21. Histidine 51 is a binding site for (6R)-5,10-methylene-5,6,7,8-tetrahydrofolate. A dUMP-binding site is contributed by 126 to 127; that stretch reads RR. The Nucleophile role is filled by cysteine 146. DUMP is bound by residues 166-169, asparagine 177, and 207-209; these read RSCD and HLY. (6R)-5,10-methylene-5,6,7,8-tetrahydrofolate is bound at residue aspartate 169. Position 263 (alanine 263) interacts with (6R)-5,10-methylene-5,6,7,8-tetrahydrofolate.

It belongs to the thymidylate synthase family. Bacterial-type ThyA subfamily. As to quaternary structure, homodimer.

It is found in the cytoplasm. It carries out the reaction dUMP + (6R)-5,10-methylene-5,6,7,8-tetrahydrofolate = 7,8-dihydrofolate + dTMP. It participates in pyrimidine metabolism; dTTP biosynthesis. Its function is as follows. Catalyzes the reductive methylation of 2'-deoxyuridine-5'-monophosphate (dUMP) to 2'-deoxythymidine-5'-monophosphate (dTMP) while utilizing 5,10-methylenetetrahydrofolate (mTHF) as the methyl donor and reductant in the reaction, yielding dihydrofolate (DHF) as a by-product. This enzymatic reaction provides an intracellular de novo source of dTMP, an essential precursor for DNA biosynthesis. In Aeromonas hydrophila subsp. hydrophila (strain ATCC 7966 / DSM 30187 / BCRC 13018 / CCUG 14551 / JCM 1027 / KCTC 2358 / NCIMB 9240 / NCTC 8049), this protein is Thymidylate synthase.